The chain runs to 170 residues: Photosystem I assembly protein Ycf3 (170 aa).

TPR repeat units lie at residues 35–68 (AFCY…EEDP), 72–105 (SYII…NPRL), and 120–153 (GLKA…APNN).

It belongs to the Ycf3 family.

It localises to the plastid. It is found in the chloroplast thylakoid membrane. Its function is as follows. Essential for the assembly of the photosystem I (PSI) complex. May act as a chaperone-like factor to guide the assembly of the PSI subunits. This chain is Photosystem I assembly protein Ycf3, found in Gracilaria tenuistipitata var. liui (Red alga).